The primary structure comprises 364 residues: Aminomethyltransferase (364 aa).

This sequence belongs to the GcvT family. The glycine cleavage system is composed of four proteins: P, T, L and H.

It carries out the reaction N(6)-[(R)-S(8)-aminomethyldihydrolipoyl]-L-lysyl-[protein] + (6S)-5,6,7,8-tetrahydrofolate = N(6)-[(R)-dihydrolipoyl]-L-lysyl-[protein] + (6R)-5,10-methylene-5,6,7,8-tetrahydrofolate + NH4(+). The glycine cleavage system catalyzes the degradation of glycine. This is Aminomethyltransferase from Shewanella putrefaciens (strain CN-32 / ATCC BAA-453).